The chain runs to 252 residues: Large ribosomal subunit protein uL4 (252 aa).

Belongs to the universal ribosomal protein uL4 family. In terms of assembly, part of the 50S ribosomal subunit.

Its function is as follows. One of the primary rRNA binding proteins, this protein initially binds near the 5'-end of the 23S rRNA. It is important during the early stages of 50S assembly. It makes multiple contacts with different domains of the 23S rRNA in the assembled 50S subunit and ribosome. In terms of biological role, forms part of the polypeptide exit tunnel. The sequence is that of Large ribosomal subunit protein uL4 from Methanococcus aeolicus (strain ATCC BAA-1280 / DSM 17508 / OCM 812 / Nankai-3).